We begin with the raw amino-acid sequence, 155 residues long: Small ribosomal subunit protein uS7c (155 aa).

The protein belongs to the universal ribosomal protein uS7 family. In terms of assembly, part of the 30S ribosomal subunit.

Its subcellular location is the plastid. It is found in the chloroplast. Its function is as follows. One of the primary rRNA binding proteins, it binds directly to 16S rRNA where it nucleates assembly of the head domain of the 30S subunit. In Cryptomeria japonica (Japanese cedar), this protein is Small ribosomal subunit protein uS7c (rps7).